The chain runs to 219 residues: Mediator of RNA polymerase II transcription subunit 18 (219 aa).

The protein belongs to the Mediator complex subunit 18 family. Component of the Mediator complex. Interacts with YY1 to suppress disease susceptibility via the repression of genes glutaredoxins GRX480, GRXS13 and thioredoxin TRX-h5. Binds to ABI4 to regulate abscisic acid responses; recruited by ABI4 to ABI5 promoter in the presence of abscisic acid (ABA). Interacts with SUF4 to regulate flowering time; recruited by SUF4 to FLC promoter.

Its subcellular location is the nucleus. Functionally, component of the Mediator complex, a coactivator involved in the regulated transcription of nearly all RNA polymerase II-dependent genes. Mediator functions as a bridge to convey information from gene-specific regulatory proteins to the basal RNA polymerase II transcription machinery. The Mediator complex, having a compact conformation in its free form, is recruited to promoters by direct interactions with regulatory proteins and serves for the assembly of a functional pre-initiation complex with RNA polymerase II and the general transcription factors. Involved in the regulation of histone H3 lysine tri-methylation (H3K36me3). Associates with the promoter, coding and terminator regions of target genes suggesting its function in transcription initiation, elongation and termination. Multifunctional protein which regulates plant immunity, especially during necrotrophic fungal infection (e.g. B.cinerea and A.brassicicola), flowering time and responses to hormones (e.g. abscisic acid ABA and ethylene) through interactions with distinct transcription factors. The polypeptide is Mediator of RNA polymerase II transcription subunit 18 (Arabidopsis thaliana (Mouse-ear cress)).